The primary structure comprises 91 residues: Gas vesicle protein K (91 aa).

Belongs to the gas vesicle GvpK family.

The protein localises to the gas vesicle. Might be involved in nucleating gas vesicle formation. Gas vesicles are hollow, gas filled proteinaceous nanostructures found in some microorganisms. It is not clear what function gas vesicles perform in soil bacteria. This chain is Gas vesicle protein K, found in Streptomyces sp. (strain CB03234).